Reading from the N-terminus, the 622-residue chain is Type 2 DNA topoisomerase 6 subunit B (622 aa).

Residues N48, D80, 101-102, 111-118, and K435 each bind ATP; these read SR and GQQGIGIS.

Belongs to the TOP6B family. Homodimer. Heterotetramer of two Top6A and two Top6B chains.

It catalyses the reaction ATP-dependent breakage, passage and rejoining of double-stranded DNA.. Its function is as follows. Relaxes both positive and negative superturns and exhibits a strong decatenase activity. In Methanococcoides burtonii (strain DSM 6242 / NBRC 107633 / OCM 468 / ACE-M), this protein is Type 2 DNA topoisomerase 6 subunit B.